A 232-amino-acid chain; its full sequence is 5'-methylthioadenosine/S-adenosylhomocysteine nucleosidase (232 aa).

The Proton acceptor role is filled by E12. Substrate contacts are provided by residues G78, I152, and 173–174; that span reads ME. The active-site Proton donor is the D197.

It belongs to the PNP/UDP phosphorylase family. MtnN subfamily. As to quaternary structure, homodimer.

It carries out the reaction S-adenosyl-L-homocysteine + H2O = S-(5-deoxy-D-ribos-5-yl)-L-homocysteine + adenine. The catalysed reaction is S-methyl-5'-thioadenosine + H2O = 5-(methylsulfanyl)-D-ribose + adenine. The enzyme catalyses 5'-deoxyadenosine + H2O = 5-deoxy-D-ribose + adenine. It participates in amino-acid biosynthesis; L-methionine biosynthesis via salvage pathway; S-methyl-5-thio-alpha-D-ribose 1-phosphate from S-methyl-5'-thioadenosine (hydrolase route): step 1/2. In terms of biological role, catalyzes the irreversible cleavage of the glycosidic bond in both 5'-methylthioadenosine (MTA) and S-adenosylhomocysteine (SAH/AdoHcy) to adenine and the corresponding thioribose, 5'-methylthioribose and S-ribosylhomocysteine, respectively. Also cleaves 5'-deoxyadenosine, a toxic by-product of radical S-adenosylmethionine (SAM) enzymes, into 5-deoxyribose and adenine. Thus, is required for in vivo function of the radical SAM enzymes biotin synthase and lipoic acid synthase, that are inhibited by 5'-deoxyadenosine accumulation. In Salmonella agona (strain SL483), this protein is 5'-methylthioadenosine/S-adenosylhomocysteine nucleosidase.